Reading from the N-terminus, the 341-residue chain is Phenylalanine--tRNA ligase alpha subunit (341 aa).

E256 contacts Mg(2+).

It belongs to the class-II aminoacyl-tRNA synthetase family. Phe-tRNA synthetase alpha subunit type 1 subfamily. In terms of assembly, tetramer of two alpha and two beta subunits. Requires Mg(2+) as cofactor.

The protein resides in the cytoplasm. The catalysed reaction is tRNA(Phe) + L-phenylalanine + ATP = L-phenylalanyl-tRNA(Phe) + AMP + diphosphate + H(+). In Chlamydia abortus (strain DSM 27085 / S26/3) (Chlamydophila abortus), this protein is Phenylalanine--tRNA ligase alpha subunit.